The primary structure comprises 1356 residues: Transmembrane protein 94 (1356 aa).

Residues methionine 1–cysteine 64 are Cytoplasmic-facing. A helical transmembrane segment spans residues phenylalanine 65 to glycine 85. Topologically, residues glycine 86–arginine 92 are lumenal. A helical transmembrane segment spans residues glycine 93–isoleucine 113. The Cytoplasmic portion of the chain corresponds to glycine 114–arginine 273. Residues serine 221 and serine 225 each carry the phosphoserine modification. The chain crosses the membrane as a helical span at residues phenylalanine 274 to isoleucine 294. The Lumenal segment spans residues threonine 295 to asparagine 320. Residues glycine 321 to glycine 341 form a helical membrane-spanning segment. Topologically, residues glutamate 342–cysteine 1092 are cytoplasmic. The DKQGIL motif lies at aspartate 417–leucine 422. Disordered stretches follow at residues valine 439–proline 461 and glutamate 483–proline 541. A compositionally biased stretch (basic and acidic residues) spans glutamate 440 to leucine 449. Residues serine 444, serine 445, and serine 454 each carry the phosphoserine modification. Over residues histidine 502–histidine 511 the composition is skewed to basic residues. Residues serine 513, serine 518, serine 798, and serine 941 each carry the phosphoserine modification. Residues phenylalanine 1093–valine 1113 traverse the membrane as a helical segment. The Lumenal portion of the chain corresponds to glutamine 1114–serine 1120. The helical transmembrane segment at threonine 1121 to glycine 1141 threads the bilayer. Residues lysine 1142–tyrosine 1167 are Cytoplasmic-facing. The chain crosses the membrane as a helical span at residues phenylalanine 1168–glycine 1188. The Lumenal segment spans residues phenylalanine 1189–glycine 1228. 2 N-linked (GlcNAc...) asparagine glycosylation sites follow: asparagine 1202 and asparagine 1205. A helical transmembrane segment spans residues leucine 1229–isoleucine 1249. Over threonine 1250 to lysine 1261 the chain is Cytoplasmic. The helical transmembrane segment at serine 1262–valine 1282 threads the bilayer. The Lumenal segment spans residues glutamine 1283–proline 1306. A helical membrane pass occupies residues leucine 1307 to valine 1327. At lysine 1328–phenylalanine 1356 the chain is on the cytoplasmic side. The short motif at glycine 1351–asparagine 1353 is the GMN; metal-binding motif element.

In terms of assembly, forms homooligomers. As to expression, expressed ubiquitously.

It localises to the endoplasmic reticulum membrane. Could function in the uptake of Mg(2+) from the cytosol into the endoplasmic reticulum and regulate intracellular Mg(2+) homeostasis. This chain is Transmembrane protein 94, found in Homo sapiens (Human).